The sequence spans 200 residues: Small ribosomal subunit protein eS1 (200 aa).

The protein belongs to the eukaryotic ribosomal protein eS1 family. Part of the 30S ribosomal subunit.

This Thermococcus kodakarensis (strain ATCC BAA-918 / JCM 12380 / KOD1) (Pyrococcus kodakaraensis (strain KOD1)) protein is Small ribosomal subunit protein eS1.